The following is a 324-amino-acid chain: Protein GET4 (324 aa).

It belongs to the GET4 family. As to quaternary structure, interacts with GET3A.

The protein resides in the cytoplasm. Its subcellular location is the cytosol. In terms of biological role, involved in the regulation of root hair growth. The chain is Protein GET4 from Arabidopsis thaliana (Mouse-ear cress).